The chain runs to 451 residues: BSD domain-containing protein 1 (451 aa).

The 53-residue stretch at 146–198 folds into the BSD domain; sequence WLSRFSLEEKKGEIAELLATSPSIRALYTKMVPAAVSHSEFWQRYFYKVHRLE. Disordered stretches follow at residues 252–296 and 309–424; these read SAAL…SLVT and LQTG…DLDM. Residues 275 to 295 are compositionally biased toward low complexity; it reads PPELAPAEGSPSESSESVSLV. Positions 309–320 are enriched in polar residues; it reads LQTGVQPSGNRD. The segment covering 365 to 388 has biased composition (basic and acidic residues); that stretch reads KEVESKAQGRTETLKEEGPTDLRV. Polar residues predominate over residues 392-411; it reads NSDSGKSTPSNNGKKGSSTD. A compositionally biased stretch (acidic residues) spans 412 to 424; it reads ISEDWEKDFDLDM.

This chain is BSD domain-containing protein 1 (BSDC1), found in Gallus gallus (Chicken).